We begin with the raw amino-acid sequence, 129 residues long: Fluoride-specific ion channel FluC (129 aa).

Helical transmembrane passes span Phe-8–Ala-28, Ala-36–Leu-56, Phe-71–Val-91, and Ala-103–Leu-123. Na(+) is bound by residues Gly-78 and Thr-81.

Belongs to the fluoride channel Fluc/FEX (TC 1.A.43) family.

It is found in the cell inner membrane. The enzyme catalyses fluoride(in) = fluoride(out). Na(+) is not transported, but it plays an essential structural role and its presence is essential for fluoride channel function. Its function is as follows. Fluoride-specific ion channel. Important for reducing fluoride concentration in the cell, thus reducing its toxicity. The polypeptide is Fluoride-specific ion channel FluC (Idiomarina loihiensis (strain ATCC BAA-735 / DSM 15497 / L2-TR)).